A 273-amino-acid polypeptide reads, in one-letter code: Undecaprenyl-diphosphatase (273 aa).

The next 8 membrane-spanning stretches (helical) occupy residues isoleucine 3 to proline 23, alanine 47 to isoleucine 67, leucine 90 to leucine 110, isoleucine 120 to serine 140, isoleucine 148 to alanine 168, proline 186 to valine 206, leucine 217 to alanine 237, and tryptophan 249 to glycine 269.

The protein belongs to the UppP family.

The protein localises to the cell inner membrane. The catalysed reaction is di-trans,octa-cis-undecaprenyl diphosphate + H2O = di-trans,octa-cis-undecaprenyl phosphate + phosphate + H(+). Its function is as follows. Catalyzes the dephosphorylation of undecaprenyl diphosphate (UPP). Confers resistance to bacitracin. The protein is Undecaprenyl-diphosphatase of Thermosynechococcus vestitus (strain NIES-2133 / IAM M-273 / BP-1).